A 531-amino-acid chain; its full sequence is Tryptophan 6-halogenase ThaL (531 aa).

Positions 13, 15, 16, 39, 42, 45, 47, and 50 each coordinate FAD. Lysine 79 is an active-site residue. Proline 111 is an L-tryptophan binding site. Residues methionine 198 and leucine 349 each contribute to the FAD site. Positions 360 and 361 each coordinate chloride. Position 362 (isoleucine 362) interacts with FAD. Tyrosine 454, tyrosine 455, glutamate 461, and phenylalanine 465 together coordinate L-tryptophan.

Belongs to the flavin-dependent halogenase family. Bacterial tryptophan halogenase subfamily. As to quaternary structure, homodimer. Monomer in solution.

It carries out the reaction L-tryptophan + FADH2 + chloride + O2 = 6-chloro-L-tryptophan + FAD + 2 H2O. The catalysed reaction is D-tryptophan + FADH2 + chloride + O2 = 6-chloro-D-tryptophan + FAD + 2 H2O. Involved in the biosynthesis of thienodolin, a plant growth-regulating compound. Catalyzes the chlorination of tryptophan (Trp) at C6 position to yield 6-chloro-tryptophan. It is also able to use bromide ions to generate monobrominated Trp. In vitro, accepts a wide range of amides and peptides carrying either L- or D-Trp at the N-terminus. The chain is Tryptophan 6-halogenase ThaL from Streptomyces albogriseolus.